A 358-amino-acid chain; its full sequence is Aminomethyltransferase (358 aa).

This sequence belongs to the GcvT family. As to quaternary structure, the glycine cleavage system is composed of four proteins: P, T, L and H.

It catalyses the reaction N(6)-[(R)-S(8)-aminomethyldihydrolipoyl]-L-lysyl-[protein] + (6S)-5,6,7,8-tetrahydrofolate = N(6)-[(R)-dihydrolipoyl]-L-lysyl-[protein] + (6R)-5,10-methylene-5,6,7,8-tetrahydrofolate + NH4(+). In terms of biological role, the glycine cleavage system catalyzes the degradation of glycine. The protein is Aminomethyltransferase of Francisella tularensis subsp. holarctica (strain FTNF002-00 / FTA).